Reading from the N-terminus, the 481-residue chain is Protein DETOXIFICATION 12 (481 aa).

The next 12 membrane-spanning stretches (helical) occupy residues 38-58 (LIFF…LQIV), 76-96 (LASS…SCAL), 117-137 (YTAM…WFNM), 154-174 (AGKY…LQPL), 187-207 (LLIT…FLVY), 214-234 (LGGA…LGSF), 267-287 (AAMI…SGLL), 296-316 (VLSV…AIAA), 336-356 (IVVY…SMSL), 380-400 (MAPL…LSGI), 415-435 (LGAF…WIHL), and 438-458 (VGLW…LALV).

The protein belongs to the multi antimicrobial extrusion (MATE) (TC 2.A.66.1) family.

It is found in the membrane. The protein is Protein DETOXIFICATION 12 of Arabidopsis thaliana (Mouse-ear cress).